A 274-amino-acid chain; its full sequence is MPELPEVETSMRGISPYLVGQKIKEIIVRQPKLRWAVSSELSTMQGATIIEIYRRAKYLIIQTDKGDILVHLGMSGSLGILSVKENKAIDKHDHIDLITENGVILRYNDPRKFGTWLWAEQAETAELLANLGPEPLSEAFTSGYLFEKSRNKTVAVKNFIMNNAIVVGVGNIYACESLFMAGIHPELAAQNLTAKQCERLVTVIKEVLTKAIIQGGTTLKDFIQPDGKPGYFAQVLQVYGRKGEECNDCGSIIEAKVIGQRNSFYCPKCQRLPK.

Residue P2 is the Schiff-base intermediate with DNA of the active site. Residue E3 is the Proton donor of the active site. K57 acts as the Proton donor; for beta-elimination activity in catalysis. DNA-binding residues include H92, R111, and K152. The FPG-type zinc finger occupies 237 to 271; sequence QVYGRKGEECNDCGSIIEAKVIGQRNSFYCPKCQR. Catalysis depends on R261, which acts as the Proton donor; for delta-elimination activity.

The protein belongs to the FPG family. As to quaternary structure, monomer. The cofactor is Zn(2+).

The enzyme catalyses Hydrolysis of DNA containing ring-opened 7-methylguanine residues, releasing 2,6-diamino-4-hydroxy-5-(N-methyl)formamidopyrimidine.. The catalysed reaction is 2'-deoxyribonucleotide-(2'-deoxyribose 5'-phosphate)-2'-deoxyribonucleotide-DNA = a 3'-end 2'-deoxyribonucleotide-(2,3-dehydro-2,3-deoxyribose 5'-phosphate)-DNA + a 5'-end 5'-phospho-2'-deoxyribonucleoside-DNA + H(+). In terms of biological role, involved in base excision repair of DNA damaged by oxidation or by mutagenic agents. Acts as a DNA glycosylase that recognizes and removes damaged bases. Has a preference for oxidized purines, such as 7,8-dihydro-8-oxoguanine (8-oxoG). Has AP (apurinic/apyrimidinic) lyase activity and introduces nicks in the DNA strand. Cleaves the DNA backbone by beta-delta elimination to generate a single-strand break at the site of the removed base with both 3'- and 5'-phosphates. The sequence is that of Formamidopyrimidine-DNA glycosylase from Glaesserella parasuis serovar 5 (strain SH0165) (Haemophilus parasuis).